The chain runs to 67 residues: Probable Sec-independent protein translocase protein TatE (67 aa).

A helical transmembrane segment spans residues 4–21 (ISITKLLVVAALVVLLFG).

Belongs to the TatA/E family. TatE subfamily.

The protein resides in the cell inner membrane. Its function is as follows. Part of the twin-arginine translocation (Tat) system that transports large folded proteins containing a characteristic twin-arginine motif in their signal peptide across membranes. TatE shares overlapping functions with TatA. In Salmonella arizonae (strain ATCC BAA-731 / CDC346-86 / RSK2980), this protein is Probable Sec-independent protein translocase protein TatE.